The sequence spans 132 residues: UPF0047 protein YugU (132 aa).

The protein belongs to the UPF0047 family.

The chain is UPF0047 protein YugU (yugU) from Bacillus subtilis (strain 168).